A 182-amino-acid chain; its full sequence is uncharacterized protein (182 aa).

2 helical membrane passes run 58-78 and 81-101; these read ILFG…YVVY and PVSI…IIIW.

It to M.jannaschii MJ0803.

The protein resides in the cell membrane. This is an uncharacterized protein from Methanocaldococcus jannaschii (strain ATCC 43067 / DSM 2661 / JAL-1 / JCM 10045 / NBRC 100440) (Methanococcus jannaschii).